The following is a 284-amino-acid chain: Diaminopimelate epimerase (284 aa).

Residues N13 and N70 each coordinate substrate. Catalysis depends on C79, which acts as the Proton donor. Substrate is bound by residues 80–81 (GN), N167, N200, and 218–219 (ER). C227 serves as the catalytic Proton acceptor. 228–229 (GT) contributes to the substrate binding site.

The protein belongs to the diaminopimelate epimerase family. As to quaternary structure, homodimer.

Its subcellular location is the cytoplasm. The enzyme catalyses (2S,6S)-2,6-diaminopimelate = meso-2,6-diaminopimelate. It participates in amino-acid biosynthesis; L-lysine biosynthesis via DAP pathway; DL-2,6-diaminopimelate from LL-2,6-diaminopimelate: step 1/1. Its function is as follows. Catalyzes the stereoinversion of LL-2,6-diaminopimelate (L,L-DAP) to meso-diaminopimelate (meso-DAP), a precursor of L-lysine and an essential component of the bacterial peptidoglycan. The polypeptide is Diaminopimelate epimerase (Prochlorococcus marinus (strain NATL2A)).